A 207-amino-acid polypeptide reads, in one-letter code: MSLLENLQKLIDQTSLEVTDQQKQQLVQLVELLNKWNKAYNLTSVRDPEQMLVKHIMDSIVVSPYLIGERFIDVGTGPGLPGLPLAILNPDKQFVLLDSLGKRLRFIRQALLELGLKNVTAVQSRVEEYQPEHKFDVVLSRAFASLHDMLYWCKHLPHEEGHFLALKGQFPAQEIKELDKEFEFVESISLQVPTLEGERCLVKIKRI.

S-adenosyl-L-methionine-binding positions include Gly75, Leu80, 126–127, and Arg141; that span reads VE.

Belongs to the methyltransferase superfamily. RNA methyltransferase RsmG family.

It is found in the cytoplasm. The enzyme catalyses guanosine(527) in 16S rRNA + S-adenosyl-L-methionine = N(7)-methylguanosine(527) in 16S rRNA + S-adenosyl-L-homocysteine. Its function is as follows. Specifically methylates the N7 position of guanine in position 527 of 16S rRNA. This is Ribosomal RNA small subunit methyltransferase G from Psychromonas ingrahamii (strain DSM 17664 / CCUG 51855 / 37).